A 109-amino-acid chain; its full sequence is Large ribosomal subunit protein uL24 (109 aa).

This sequence belongs to the universal ribosomal protein uL24 family. In terms of assembly, part of the 50S ribosomal subunit.

One of two assembly initiator proteins, it binds directly to the 5'-end of the 23S rRNA, where it nucleates assembly of the 50S subunit. In terms of biological role, one of the proteins that surrounds the polypeptide exit tunnel on the outside of the subunit. This is Large ribosomal subunit protein uL24 from Desulforapulum autotrophicum (strain ATCC 43914 / DSM 3382 / VKM B-1955 / HRM2) (Desulfobacterium autotrophicum).